The primary structure comprises 291 residues: ATP phosphoribosyltransferase (291 aa).

The protein belongs to the ATP phosphoribosyltransferase family. Long subfamily. Mg(2+) is required as a cofactor.

It is found in the cytoplasm. The enzyme catalyses 1-(5-phospho-beta-D-ribosyl)-ATP + diphosphate = 5-phospho-alpha-D-ribose 1-diphosphate + ATP. It participates in amino-acid biosynthesis; L-histidine biosynthesis; L-histidine from 5-phospho-alpha-D-ribose 1-diphosphate: step 1/9. Feedback inhibited by histidine. Functionally, catalyzes the condensation of ATP and 5-phosphoribose 1-diphosphate to form N'-(5'-phosphoribosyl)-ATP (PR-ATP). Has a crucial role in the pathway because the rate of histidine biosynthesis seems to be controlled primarily by regulation of HisG enzymatic activity. This Trichlorobacter lovleyi (strain ATCC BAA-1151 / DSM 17278 / SZ) (Geobacter lovleyi) protein is ATP phosphoribosyltransferase.